Here is a 983-residue protein sequence, read N- to C-terminus: ABC transporter A family member 2 (983 aa).

6 helical membrane-spanning segments follow: residues 33-53, 221-241, 279-299, 305-325, 339-359, and 416-436; these read FLQLFASFFFILLIFCIQAAM, IVALDTIGPTFFLAVAMFGFV, ILTAISALLTVLFGMMFQFDF, FPVVFLLFMLFQFNLIGLAFM, VGFFVFLVGFVTQLATSSGFP, and VLTINDIYLWLLGTFFLWFVL. Positions 518-763 constitute an ABC transporter domain; sequence VQIRGLAKTY…FGTGFIANIS (246 aa). 564–571 is an ATP binding site; that stretch reads GPNGAGKT. The tract at residues 963–983 is disordered; it reads RSGSTSSRRFSRSGSSRRFSS.

Belongs to the ABC transporter superfamily. ABCA family. CPR flippase (TC 3.A.1.211) subfamily.

The protein localises to the membrane. In Arabidopsis thaliana (Mouse-ear cress), this protein is ABC transporter A family member 2 (ABCA2).